We begin with the raw amino-acid sequence, 291 residues long: Acetylglutamate kinase (291 aa).

Substrate is bound by residues G64–G65, R86, and N190.

It belongs to the acetylglutamate kinase family. ArgB subfamily.

The protein localises to the cytoplasm. It carries out the reaction N-acetyl-L-glutamate + ATP = N-acetyl-L-glutamyl 5-phosphate + ADP. It participates in amino-acid biosynthesis; L-arginine biosynthesis; N(2)-acetyl-L-ornithine from L-glutamate: step 2/4. Its function is as follows. Catalyzes the ATP-dependent phosphorylation of N-acetyl-L-glutamate. The chain is Acetylglutamate kinase from Leptospira borgpetersenii serovar Hardjo-bovis (strain JB197).